Reading from the N-terminus, the 374-residue chain is Transcription termination factor 1, mitochondrial (374 aa).

The N-terminal 37 residues, M1 to P37, are a transit peptide targeting the mitochondrion. Interaction with DNA stretches follow at residues R146–S147, Q224–R228, S301–K308, S332–T335, and S361–K368.

Belongs to the mTERF family. As to quaternary structure, monomer. In terms of processing, is a phosphoprotein. While the DNA-binding activity is unaffected by the phosphorylation/dephosphorylation state, only the phosphorylated form of the protein is active for termination activity. Functioning seems to be regulated by phosphorylation.

The protein localises to the mitochondrion. Its function is as follows. Transcription termination factor. Binds to a 28 bp region within the tRNA(Leu(uur)) gene at a position immediately adjacent to and downstream of the 16S rRNA gene; this region comprises a tridecamer sequence critical for directing accurate termination. Binds DNA along the major grove and promotes DNA bending and partial unwinding. Promotes base flipping. Transcription termination activity appears to be polarized with highest specificity for transcripts initiated on the light strand. The sequence is that of Transcription termination factor 1, mitochondrial (Mterf1) from Rattus norvegicus (Rat).